A 300-amino-acid chain; its full sequence is MNNVLIITGPTASGKSKISVKIAQDNNGIIVNCDSKQIYKEIPIITDQPKLNDYSVKHRLYGYISVTQQYSVGLWIEDLKKEILSATAEKKLPIITGGSGMYINSIIYGLSQIPKIEDDVRYKTKKLFEDLGNKEFYALLINKDPLAKCLHQNNSHRLLRAYEVIEQTGISIFSWKKNTIRQPILNNFKLCVLLPPRDQVYKTINERFINMINTDVIEEIENLLSLNVPKHFPAMKAHGVPELISYLKNKISIDEAIETAQKNTRHYAKRQYTWFKNQFPNASFYDSKCQLLESIKNYQN.

An ATP-binding site is contributed by 9–16 (GPTASGKS). 11 to 16 (TASGKS) lines the substrate pocket. An interaction with substrate tRNA region spans residues 34–37 (DSKQ).

It belongs to the IPP transferase family. In terms of assembly, monomer. Mg(2+) is required as a cofactor.

The enzyme catalyses adenosine(37) in tRNA + dimethylallyl diphosphate = N(6)-dimethylallyladenosine(37) in tRNA + diphosphate. Functionally, catalyzes the transfer of a dimethylallyl group onto the adenine at position 37 in tRNAs that read codons beginning with uridine, leading to the formation of N6-(dimethylallyl)adenosine (i(6)A). This is tRNA dimethylallyltransferase from Ehrlichia canis (strain Jake).